Consider the following 410-residue polypeptide: Pectate lyase PEL9 (410 aa).

The N-terminal stretch at 1–18 is a signal peptide; it reads MMGKSVWVFAALFPAVLA. D191, D215, D216, and D219 together coordinate Ca(2+). N234 carries N-linked (GlcNAc...) asparagine glycosylation. K271 functions as the Proton acceptor in the catalytic mechanism. Polar residues predominate over residues 342–351; the sequence is GEAPTSLSDE. 2 disordered regions span residues 342–361 and 381–410; these read GEAP…SWDG and ERNA…DWSA.

This sequence belongs to the polysaccharide lyase 9 family. It depends on Ca(2+) as a cofactor.

It is found in the secreted. The enzyme catalyses Eliminative cleavage of (1-&gt;4)-alpha-D-galacturonan to give oligosaccharides with 4-deoxy-alpha-D-galact-4-enuronosyl groups at their non-reducing ends.. With respect to regulation, inhibited by iron ions. Activated in presence of the surfactant polysorbate 20, while inhibited in the presence of Triton X-100 and sodium dodecyl sulfate. Inhibited in presence of the organic solvents methanol, ethanol, propan-2-ol and acetone. Its function is as follows. Presents an endo-cleaving activity on the homogalacturonan (HG) region in pectin. Active on homogalacturonan with a degree of polymerization above 4, and does not appear to be affected by the degree of methylation of the substrate. Does not degrade linear rhamnogalacturonan. The protein is Pectate lyase PEL9 of Emericella nidulans (strain FGSC A4 / ATCC 38163 / CBS 112.46 / NRRL 194 / M139) (Aspergillus nidulans).